Consider the following 418-residue polypeptide: UDP-N-acetylglucosamine 1-carboxyvinyltransferase (418 aa).

Lys22–Asn23 serves as a coordination point for phosphoenolpyruvate. Arg92 lines the UDP-N-acetyl-alpha-D-glucosamine pocket. Cys116 serves as the catalytic Proton donor. Cys116 is subject to 2-(S-cysteinyl)pyruvic acid O-phosphothioketal. UDP-N-acetyl-alpha-D-glucosamine contacts are provided by Asp306 and Ile328.

Belongs to the EPSP synthase family. MurA subfamily.

It is found in the cytoplasm. The catalysed reaction is phosphoenolpyruvate + UDP-N-acetyl-alpha-D-glucosamine = UDP-N-acetyl-3-O-(1-carboxyvinyl)-alpha-D-glucosamine + phosphate. The protein operates within cell wall biogenesis; peptidoglycan biosynthesis. In terms of biological role, cell wall formation. Adds enolpyruvyl to UDP-N-acetylglucosamine. This Shewanella amazonensis (strain ATCC BAA-1098 / SB2B) protein is UDP-N-acetylglucosamine 1-carboxyvinyltransferase.